A 465-amino-acid polypeptide reads, in one-letter code: Cysteine--tRNA ligase (465 aa).

Position 27 (Cys-27) interacts with Zn(2+). Residues 29 to 39 (PTVYDDAHLGH) carry the 'HIGH' region motif. The tract at residues 153-173 (DISHKVSDDDTQSRVEHNSEK) is disordered. Residues Cys-208, His-237, and Glu-241 each coordinate Zn(2+). A 'KMSKS' region motif is present at residues 269–273 (KMSKS). Lys-272 serves as a coordination point for ATP.

This sequence belongs to the class-I aminoacyl-tRNA synthetase family. As to quaternary structure, monomer. Zn(2+) is required as a cofactor.

It is found in the cytoplasm. The enzyme catalyses tRNA(Cys) + L-cysteine + ATP = L-cysteinyl-tRNA(Cys) + AMP + diphosphate. The polypeptide is Cysteine--tRNA ligase (Sulfurovum sp. (strain NBC37-1)).